The sequence spans 615 residues: Matrix metalloproteinase-25 (615 aa).

Residues 1–162 (MCFPGSQISP…AAGLVRRRRR (162 aa)) constitute a propeptide that is removed on maturation. A helical transmembrane segment spans residues 53-73 (ILRLPAFGLPLLALLLVPLLP). The Cysteine switch signature appears at 143-150 (PRCSLPDV). Residues C145 and H287 each contribute to the Zn(2+) site. The active site involves E288. The Zn(2+) site is built by H291 and H297. Positions 336–366 (VSQNPNARPTRKPLVPPPQPPAMPPDSPATP) are disordered. The span at 349–366 (LVPPPQPPAMPPDSPATP) shows a compositional bias: pro residues. Hemopexin repeat units lie at residues 368-417 (PDRC…WEGL), 421-466 (VKVI…GLPP), 467-515 (GEDV…DGAP), and 516-562 (FAPD…WLDC). A disulfide bridge links C371 with C562. The interval 547–582 (AESDSPQPIGPKWLDCPAPNSDPRVTSPPKTTSKTR) is disordered. A593 carries the GPI-anchor amidated alanine lipid modification. Residues 594–615 (SEQLSPLLLPLLPLVAGEVFSY) constitute a propeptide, removed in mature form.

This sequence belongs to the peptidase M10A family. Requires Zn(2+) as cofactor. Ca(2+) serves as cofactor. Post-translationally, the precursor is cleaved by a furin endopeptidase.

It localises to the cell membrane. May activate progelatinase A. This is Matrix metalloproteinase-25 (Mmp25) from Mus musculus (Mouse).